A 1059-amino-acid chain; its full sequence is Ceruloplasmin (1059 aa).

Positions 1–19 are cleaved as a signal peptide; it reads MKFLLLSALLFLHSSLAWT. Plastocyanin-like domains lie at 20-199, 208-356, 369-554, 564-712, 724-894, and 902-1055; these read REKH…LILC, KEEN…VRDC, HVRH…MKIC, RQKD…VNQC, GERT…LIVC, and FNPK…PNQE. Na(+)-binding residues include Tyr-55, Gly-64, and Tyr-67. Positions 120 and 122 each coordinate Cu(2+). His-120 lines the O2 pocket. A Ca(2+)-binding site is contributed by Lys-128. The N-linked (GlcNAc...) asparagine glycan is linked to Asn-138. Residues Gln-143, Asp-146, and Asp-147 each contribute to the Ca(2+) site. A disulfide bridge links Cys-173 with Cys-199. Residues His-179 and His-181 each contribute to the Cu(2+) site. His-179 is an O2 binding site. A glycan (N-linked (GlcNAc...) asparagine) is linked at Asn-226. Ser-255 contacts Na(+). Residues Cys-275 and Cys-356 are joined by a disulfide bond. Residues His-294, Cys-337, and His-342 each contribute to the Cu(2+) site. N-linked (GlcNAc...) asparagine glycosylation is present at Asn-396. Phe-407, Gly-416, and Tyr-419 together coordinate Na(+). Cys-528 and Cys-554 are joined by a disulfide. Asn-582 is a glycosylation site (N-linked (GlcNAc...) asparagine). Ser-611 serves as a coordination point for Na(+). The cysteines at positions 631 and 712 are disulfide-linked. Cu(2+) contacts are provided by His-650, Cys-693, His-698, and Met-703. The Nucleophile; for glutathione peroxidase activity role is filled by Cys-693. Asn-756 is a glycosylation site (N-linked (GlcNAc...) asparagine). Residues Phe-761, Gly-770, and Tyr-773 each coordinate Na(+). The cysteines at positions 868 and 894 are disulfide-linked. N-linked (GlcNAc...) asparagine glycosylation is present at Asn-920. Position 949 (Ser-949) interacts with Na(+). Cu(2+)-binding residues include His-988, His-991, His-993, His-1033, Cys-1034, His-1035, His-1039, and Met-1044. His-991 and His-993 together coordinate O2. His-1035 serves as a coordination point for O2.

Belongs to the multicopper oxidase family. Found in a complex with MPO and LTF; interacts directly with MPO and LTF, which allows Fe(3+) incorporation into LTF, activation of CP ferroxidase activity and protection of CP antioxidant properties by MPO. The cofactor is Cu(2+). As to expression, synthesized in liver and secreted into the plasma. Also choroid plexus, yolk sac, placenta, and testis; not in stomach and small intestine. Fetal lung and liver.

Its subcellular location is the secreted. It carries out the reaction 4 Fe(2+) + O2 + 4 H(+) = 4 Fe(3+) + 2 H2O. The enzyme catalyses 4 Cu(+) + O2 + 4 H(+) = 4 Cu(2+) + 2 H2O. The catalysed reaction is a hydroperoxide + 2 glutathione = an alcohol + glutathione disulfide + H2O. It catalyses the reaction 4 nitric oxide + O2 + 2 H2O = 4 nitrite + 4 H(+). It carries out the reaction 2 glutathione + H2O2 = glutathione disulfide + 2 H2O. In terms of biological role, multifunctional blue, copper-binding (6-7 atoms per molecule) glycoprotein. It has ferroxidase activity oxidizing Fe(2+) to Fe(3+) without releasing radical oxygen species. It is involved in iron transport across the cell membrane. Copper ions provide a large number of enzymatic activites. Oxidizes highly toxic ferrous ions to the ferric state for further incorporation onto apo-transferrins, catalyzes Cu(+) oxidation and promotes the oxidation of biogenic amines such as norepinephrin and serotonin. Provides Cu(2+) ions for the ascorbate-mediated deaminase degradation of the heparan sulfate chains of GPC1. Has glutathione peroxidase-like activity, can remove both hydrogen peroxide and lipid hydroperoxide in the presence of thiols. Also shows NO-oxidase and NO2 synthase activities that determine endocrine NO homeostasis. This Rattus norvegicus (Rat) protein is Ceruloplasmin (Cp).